Here is a 589-residue protein sequence, read N- to C-terminus: Muscarinic acetylcholine receptor M3 (589 aa).

Residues 1 to 66 are Extracellular-facing; the sequence is MTLHSNSTTS…DPLGGHTIWQ (66 aa). Asparagine 6, asparagine 15, asparagine 41, asparagine 48, and asparagine 52 each carry an N-linked (GlcNAc...) asparagine glycan. Residues 67–90 form a helical membrane-spanning segment; the sequence is VVFIAFLTGFLALVTIIGNILVIV. At 91 to 103 the chain is on the cytoplasmic side; the sequence is AFKVNKQLKTVNN. The helical transmembrane segment at 104–129 threads the bilayer; that stretch reads YFLLSLACADLIIGVISMNLFTTYII. The Extracellular segment spans residues 130–141; the sequence is MNRWALGNLACD. An intrachain disulfide couples cysteine 140 to cysteine 220. The helical transmembrane segment at 142 to 163 threads the bilayer; that stretch reads LWLSIDYVASNASVMNLLVISF. At 164–183 the chain is on the cytoplasmic side; it reads DRYFSITRPLTYRAKRTTKR. The helical transmembrane segment at 184–205 threads the bilayer; the sequence is AGVMIGLAWVISFVLWAPAILF. Over 206–228 the chain is Extracellular; that stretch reads WQYFVGKRTVPPGECFIQFLSEP. The chain crosses the membrane as a helical span at residues 229–251; it reads TITFGTAIAAFYMPVTIMTILYW. At 252-490 the chain is on the cytoplasmic side; that stretch reads RIYKETEKRT…SLIKEKKAAQ (239 aa). Residues 274–280 carry the Basolateral sorting signal motif; the sequence is AEAENFV. 2 disordered regions span residues 275–295 and 323–356; these read EAENFVHPTGSSRSCSSYELQ and AEQMDQDHSSSDSWNNNDAAASLENSASSDEEDI. Positions 283-295 are enriched in polar residues; it reads TGSSRSCSSYELQ. Residues 333–344 show a composition bias toward low complexity; it reads SDSWNNNDAAAS. Serine 384 carries the phosphoserine modification. A helical transmembrane segment spans residues 491–513; the sequence is TLSAILLAFIITWTPYNIMVLVN. The Extracellular portion of the chain corresponds to 514 to 525; the sequence is TFCDSCIPKTYW. Residues cysteine 516 and cysteine 519 are joined by a disulfide bond. Residues 526–545 traverse the membrane as a helical segment; that stretch reads NLGYWLCYINSTVNPVCYAL. The Cytoplasmic portion of the chain corresponds to 546-589; it reads CNKTFRTTFKMLLLCQCDKRKRRKQQYQQRQSVIFHKRVPEQAL.

This sequence belongs to the G-protein coupled receptor 1 family. Muscarinic acetylcholine receptor subfamily. CHRM3 sub-subfamily. In terms of assembly, homodimer; the dimers can form tetramers. Interacts with NALCN. Interacts with TMEM147. Expressed in cerebral cortex, submandibular gland, hypothalamus, pancreas, liver, and ileum.

It is found in the cell membrane. The protein resides in the postsynaptic cell membrane. Its subcellular location is the basolateral cell membrane. It localises to the endoplasmic reticulum membrane. The muscarinic acetylcholine receptor mediates various cellular responses, including inhibition of adenylate cyclase, breakdown of phosphoinositides and modulation of potassium channels through the action of G proteins. Primary transducing effect is Pi turnover. In Mus musculus (Mouse), this protein is Muscarinic acetylcholine receptor M3 (Chrm3).